Here is a 110-residue protein sequence, read N- to C-terminus: uncharacterized protein (110 aa).

The first 23 residues, 1–23 (MKRITINIITMFIAAAVISLTGT), serve as a signal peptide directing secretion.

This is an uncharacterized protein from Bacillus subtilis (strain 168).